Reading from the N-terminus, the 197-residue chain is Rac-like GTP-binding protein ARAC6 (197 aa).

GTP is bound at residue 13–20 (GDGAVGKT). The short motif at 35–43 (YVPTVFDNF) is the Effector region element. GTP contacts are provided by residues 60-64 (DTAGQ) and 118-121 (TKLD). A GDP-binding site is contributed by Ser160. Cys194 bears the Cysteine methyl ester mark. The S-geranylgeranyl cysteine moiety is linked to residue Cys194. A propeptide spans 195 to 197 (SIL) (removed in mature form).

Belongs to the small GTPase superfamily. Rho family. As to quaternary structure, interacts with SPK1. Ubiquitous. Preferentially expressed in mature pollen and pollen tubes.

Its subcellular location is the cytoplasm. The protein resides in the membrane. Its function is as follows. May be involved in cell polarity control during the actin-dependent tip growth of pollen tubes. In terms of biological role, inactive GDP-bound Rho GTPases reside in the cytosol, are found in a complex with Rho GDP-dissociation inhibitors (Rho GDIs), and are released from the GDI protein in order to translocate to membranes upon activation. The chain is Rac-like GTP-binding protein ARAC6 (ARAC6) from Arabidopsis thaliana (Mouse-ear cress).